The primary structure comprises 636 residues: Chaperone protein DnaK (636 aa).

Thr-196 bears the Phosphothreonine; by autocatalysis mark. The disordered stretch occupies residues Leu-591–Lys-636. Residues Pro-614–Val-624 are compositionally biased toward basic and acidic residues.

Belongs to the heat shock protein 70 family.

Its function is as follows. Acts as a chaperone. This is Chaperone protein DnaK from Solibacter usitatus (strain Ellin6076).